The primary structure comprises 223 residues: Cytidylate kinase (223 aa).

ATP is bound at residue 10–18 (GPASSGKST).

Belongs to the cytidylate kinase family. Type 1 subfamily.

It localises to the cytoplasm. The enzyme catalyses CMP + ATP = CDP + ADP. It catalyses the reaction dCMP + ATP = dCDP + ADP. The polypeptide is Cytidylate kinase (Streptococcus pneumoniae (strain Taiwan19F-14)).